The sequence spans 356 residues: 11-beta-hydroxysteroid dehydrogenase (356 aa).

A helical; Signal-anchor for type II membrane protein membrane pass occupies residues 10 to 30 (LVVPPAGLLMLAFAWPSLAFF). The Proline-knob motif lies at 13 to 26 (PPAGLLMLAFAWPS). Position 54–85 (54–85 (GASSGIGEQIAYQYAKRRANLVLVARREHRLR)) interacts with NADP(+). Serine 184 serves as a coordination point for substrate. The active-site Proton acceptor is tyrosine 197. NADP(+) is bound by residues 197 to 201 (YNAAK) and lysine 201.

Belongs to the short-chain dehydrogenases/reductases (SDR) family. Expressed in megagametophytes (at protein level).

It is found in the lipid droplet. The protein localises to the membrane. It catalyses the reaction an 11beta-hydroxysteroid + NADP(+) = an 11-oxosteroid + NADPH + H(+). It carries out the reaction corticosterone + NADP(+) = 11-dehydrocorticosterone + NADPH + H(+). The catalysed reaction is 17beta-estradiol + NADP(+) = estrone + NADPH + H(+). In terms of biological role, has dehydrogenase activity against corticosterone (11 beta-hydroxysteroid) and estradiol (17 beta-hydroxysteroid) in the presence of NADP(+). May be involved in signal transduction regulated by various sterols. This Pinus massoniana (Chinese red pine) protein is 11-beta-hydroxysteroid dehydrogenase.